The sequence spans 149 residues: UPF0178 protein NT01CX_0440 (149 aa).

Belongs to the UPF0178 family.

The protein is UPF0178 protein NT01CX_0440 of Clostridium novyi (strain NT).